The sequence spans 389 residues: Ankyrin repeat domain-containing protein 42 (389 aa).

The segment at Met-1 to Ser-21 is disordered. The segment covering Ser-7 to Pro-19 has biased composition (polar residues). ANK repeat units follow at residues Val-25 to His-60, Arg-64 to Ala-93, Arg-97 to Val-126, Arg-130 to Asp-159, Asn-163 to Gln-192, Asn-200 to Asp-232, Thr-235 to Glu-265, Asn-269 to Ile-298, and Ala-302 to Asp-332.

This Homo sapiens (Human) protein is Ankyrin repeat domain-containing protein 42 (ANKRD42).